The chain runs to 225 residues: Esterase OVCA2 (225 aa).

Catalysis depends on charge relay system residues Ser-119, Asp-177, and His-204.

It belongs to the LovG family. As to expression, strongly expressed in kidney and liver. Moderately expressed in brain, skin and testis. Weakly expressed in heart, lung, small intestine, spleen, stomach and thymus.

The enzyme catalyses a carboxylic ester + H2O = an alcohol + a carboxylate + H(+). Exhibits ester hydrolase activity with a strong preference for long-chain alkyl ester substrates and high selectivity against a variety of short, branched, and substituted esters. Is able to hydrolyze ester bonds within a wide range of p-nitrophenyl derivatives (C2-C14) in vitro, with a strong preference toward substrates of &gt;8 carbons. In Mus musculus (Mouse), this protein is Esterase OVCA2 (Ovca2).